Consider the following 600-residue polypeptide: UvrABC system protein C (600 aa).

One can recognise a GIY-YIG domain in the interval N15–I100. In terms of domain architecture, UVR spans S203–L238.

This sequence belongs to the UvrC family. In terms of assembly, interacts with UvrB in an incision complex.

Its subcellular location is the cytoplasm. The UvrABC repair system catalyzes the recognition and processing of DNA lesions. UvrC both incises the 5' and 3' sides of the lesion. The N-terminal half is responsible for the 3' incision and the C-terminal half is responsible for the 5' incision. The chain is UvrABC system protein C from Campylobacter jejuni (strain RM1221).